Consider the following 259-residue polypeptide: Borneol dehydrogenase, mitochondrial (259 aa).

The transit peptide at methionine 1 to leucine 30 directs the protein to the mitochondrion. Residues serine 21–isoleucine 23, aspartate 42, aspartate 63–valine 64, and asparagine 90–glycine 92 contribute to the NAD(+) site. Serine 144 serves as the catalytic Proton donor. The substrate site is built by serine 144 and tyrosine 157. Tyrosine 157, lysine 161, and threonine 192 together coordinate NAD(+). The active-site Proton acceptor is the tyrosine 157. Lysine 161 acts as the Proton donor/acceptor in catalysis.

This sequence belongs to the short-chain dehydrogenases/reductases (SDR) family. Specifically expressed in glandular trichomes of mature flowers.

The protein localises to the mitochondrion. The catalysed reaction is borneol + NAD(+) = camphor + NADH + H(+). The protein operates within secondary metabolite biosynthesis; terpenoid biosynthesis. Its function is as follows. Involved in the biosynthesis of monoterpenes natural products related to camphor. Catalyzes the conversion of borneol into camphor. In Lavandula x intermedia (Lavandin), this protein is Borneol dehydrogenase, mitochondrial.